The primary structure comprises 160 residues: MGDKIAVIPGTFDPITNGHLDIIERAAKIFDVLYVSVLNNSSKKPLFTIEERMEMIRQVTAHLPNVQVESASGLTVDYAATRGATAIVRGLRAVSDFEYEMQIASMNRTLNAEIETFFIMTNTKYSFLSSSMVKEVAQYQGDISELVPEIVNEQVQAKFK.

Substrate is bound at residue T11. ATP-binding positions include 11–12 (TF) and H19. The substrate site is built by K43, T75, and R89. ATP-binding positions include 90 to 92 (GLR), E100, and 125 to 131 (YSFLSSS).

Belongs to the bacterial CoaD family. Homohexamer. Mg(2+) serves as cofactor.

The protein localises to the cytoplasm. It catalyses the reaction (R)-4'-phosphopantetheine + ATP + H(+) = 3'-dephospho-CoA + diphosphate. It participates in cofactor biosynthesis; coenzyme A biosynthesis; CoA from (R)-pantothenate: step 4/5. In terms of biological role, reversibly transfers an adenylyl group from ATP to 4'-phosphopantetheine, yielding dephospho-CoA (dPCoA) and pyrophosphate. This Listeria monocytogenes serotype 4b (strain CLIP80459) protein is Phosphopantetheine adenylyltransferase.